Here is a 314-residue protein sequence, read N- to C-terminus: Aspartate carbamoyltransferase catalytic subunit (314 aa).

Positions 63 and 64 each coordinate carbamoyl phosphate. Lys-91 serves as a coordination point for L-aspartate. Residues Arg-113, His-143, and Gln-146 each contribute to the carbamoyl phosphate site. 2 residues coordinate L-aspartate: Arg-176 and Arg-228. Residues Ala-269 and Pro-270 each coordinate carbamoyl phosphate.

It belongs to the aspartate/ornithine carbamoyltransferase superfamily. ATCase family. As to quaternary structure, heterododecamer (2C3:3R2) of six catalytic PyrB chains organized as two trimers (C3), and six regulatory PyrI chains organized as three dimers (R2).

It carries out the reaction carbamoyl phosphate + L-aspartate = N-carbamoyl-L-aspartate + phosphate + H(+). It functions in the pathway pyrimidine metabolism; UMP biosynthesis via de novo pathway; (S)-dihydroorotate from bicarbonate: step 2/3. In terms of biological role, catalyzes the condensation of carbamoyl phosphate and aspartate to form carbamoyl aspartate and inorganic phosphate, the committed step in the de novo pyrimidine nucleotide biosynthesis pathway. This is Aspartate carbamoyltransferase catalytic subunit from Cutibacterium acnes (strain DSM 16379 / KPA171202) (Propionibacterium acnes).